The sequence spans 395 residues: Ribonuclease D (395 aa).

One can recognise a 3'-5' exonuclease domain in the interval 14–181; that stretch reads LITKSEDLAA…VYETLRDRLE (168 aa). Residues 219–300 form the HRDC domain; that stretch reads NRRYLGLLRA…AEARGLPDAD (82 aa).

It belongs to the RNase D family. Requires a divalent metal cation as cofactor.

The protein resides in the cytoplasm. The enzyme catalyses Exonucleolytic cleavage that removes extra residues from the 3'-terminus of tRNA to produce 5'-mononucleotides.. Functionally, exonuclease involved in the 3' processing of various precursor tRNAs. Initiates hydrolysis at the 3'-terminus of an RNA molecule and releases 5'-mononucleotides. The polypeptide is Ribonuclease D (Granulibacter bethesdensis (strain ATCC BAA-1260 / CGDNIH1)).